The following is a 399-amino-acid chain: Chorismate synthase (399 aa).

Positions 40 and 46 each coordinate NADP(+). Residues 129–131 (RSS), 257–258 (QA), G302, 317–321 (KPISS), and R343 each bind FMN.

The protein belongs to the chorismate synthase family. In terms of assembly, homotetramer. The cofactor is FMNH2.

It catalyses the reaction 5-O-(1-carboxyvinyl)-3-phosphoshikimate = chorismate + phosphate. The protein operates within metabolic intermediate biosynthesis; chorismate biosynthesis; chorismate from D-erythrose 4-phosphate and phosphoenolpyruvate: step 7/7. Its function is as follows. Catalyzes the anti-1,4-elimination of the C-3 phosphate and the C-6 proR hydrogen from 5-enolpyruvylshikimate-3-phosphate (EPSP) to yield chorismate, which is the branch point compound that serves as the starting substrate for the three terminal pathways of aromatic amino acid biosynthesis. This reaction introduces a second double bond into the aromatic ring system. This is Chorismate synthase from Chlorobium chlorochromatii (strain CaD3).